Reading from the N-terminus, the 301-residue chain is MSGDGEWRQELDEQQLEDVRRLLLAVREADGRPEVEPAGALPGEFDGGEHLVACVEGEVVGYAHLNTTGNSFGHQVAELFVHPAHRNRGYGAKLLQALDERAAVGFRVWAHGDHPAARKLALKTGLERKRELLILHVDVEGADWPEPILRDGVSLRTFVPGQDEDAVVRVNARAFDWHPEQGALTVEDVRADERRAWFDEDGFFLAEERGEVIGFHWTKVHEPTPGRFGGERVGEVYVVGVDPAAQGGGLGRALTLAGLRYLASRGLRQIILYVEGDNAAALAVYTKLGFTRHETDVQYGR.

2 consecutive N-acetyltransferase domains span residues 6-151 (EWRQ…ILRD) and 153-301 (VSLR…QYGR). 79-81 (LFV) contributes to the acetyl-CoA binding site. 1D-myo-inositol 2-(L-cysteinylamino)-2-deoxy-alpha-D-glucopyranoside is bound by residues E180, K219, and E235. Acetyl-CoA is bound by residues 239–241 (VGV) and 246–252 (QGGGLGR). Y273 serves as a coordination point for 1D-myo-inositol 2-(L-cysteinylamino)-2-deoxy-alpha-D-glucopyranoside.

This sequence belongs to the acetyltransferase family. MshD subfamily. As to quaternary structure, monomer.

The catalysed reaction is 1D-myo-inositol 2-(L-cysteinylamino)-2-deoxy-alpha-D-glucopyranoside + acetyl-CoA = mycothiol + CoA + H(+). Catalyzes the transfer of acetyl from acetyl-CoA to desacetylmycothiol (Cys-GlcN-Ins) to form mycothiol. In Amycolatopsis mediterranei (strain U-32), this protein is Mycothiol acetyltransferase.